Here is a 229-residue protein sequence, read N- to C-terminus: Large ribosomal subunit protein uL1 (229 aa).

It belongs to the universal ribosomal protein uL1 family. As to quaternary structure, part of the 50S ribosomal subunit.

In terms of biological role, binds directly to 23S rRNA. The L1 stalk is quite mobile in the ribosome, and is involved in E site tRNA release. Functionally, protein L1 is also a translational repressor protein, it controls the translation of the L11 operon by binding to its mRNA. This Clostridium botulinum (strain 657 / Type Ba4) protein is Large ribosomal subunit protein uL1.